The chain runs to 357 residues: Endo-1,4-beta-xylanase Xyn11B (357 aa).

The signal sequence occupies residues 1 to 27 (MKIFQNTKNVIVSIAWAAALCTSAVSA). The GH11 domain occupies 29–226 (TLTSNSTGTN…SRGSSDITVS (198 aa)). Catalysis depends on Glu116, which acts as the Nucleophile. Glu213 (proton donor) is an active-site residue. A disordered region spans residues 220 to 245 (SSDITVSQGGSSGGGNSSSSSSASGG).

It belongs to the glycosyl hydrolase 11 (cellulase G) family.

The protein resides in the secreted. It carries out the reaction Endohydrolysis of (1-&gt;4)-beta-D-xylosidic linkages in xylans.. It functions in the pathway glycan degradation; xylan degradation. Its function is as follows. Endo-acting xylanase which specifically cleaves internal linkages on the xylan backbone, releasing xylooligosaccharides. Is able to hydrolyze glucuronoxylan and the arabinoxylan from wheat. This Cellvibrio japonicus (Pseudomonas fluorescens subsp. cellulosa) protein is Endo-1,4-beta-xylanase Xyn11B (xyn11B).